We begin with the raw amino-acid sequence, 131 residues long: UPF0102 protein H16_A3579 (131 aa).

This sequence belongs to the UPF0102 family.

The sequence is that of UPF0102 protein H16_A3579 from Cupriavidus necator (strain ATCC 17699 / DSM 428 / KCTC 22496 / NCIMB 10442 / H16 / Stanier 337) (Ralstonia eutropha).